We begin with the raw amino-acid sequence, 109 residues long: PMTDLLAAGDISKAVSAFAAPESFNHKKFFELCGLKSKSKEIMQKVFHVLDQDQSGFIEKEELCLILKGFTPEGRSLSDKETTALLAAGDKDGDGKIGVDEFVTLVSES.

2 EF-hand domains span residues 38-73 (KSKE…FTPE) and 77-109 (LSDK…VSES). Residues D51, D53, S55, F57, E59, E62, D90, D92, D94, K96, and E101 each contribute to the Ca(2+) site.

Belongs to the parvalbumin family.

In terms of biological role, in muscle, parvalbumin is thought to be involved in relaxation after contraction. It binds two calcium ions. This Pelophylax lessonae (Pool frog) protein is Parvalbumin alpha.